We begin with the raw amino-acid sequence, 632 residues long: Bestrophin homolog 24 (632 aa).

Transmembrane regions (helical) follow at residues 28–48 (IWKA…ILSV), 83–103 (GFFV…IGFI), 234–254 (IMYP…CLLA), and 271–291 (LYFP…MKVA). Disordered regions lie at residues 491–516 (LSNK…EHPF) and 562–632 (ETEV…TKFE). Over residues 563–602 (TEVKRDEKKKKEEELREEGDNGKEEKDNKEDKKEEQDRPS) the composition is skewed to basic and acidic residues. Residues 623-632 (PHLRPPTKFE) are compositionally biased toward basic residues.

The protein belongs to the anion channel-forming bestrophin (TC 1.A.46) family. Calcium-sensitive chloride channel subfamily. In terms of assembly, forms oligomers.

The protein resides in the cell membrane. In terms of biological role, forms chloride channels. This chain is Bestrophin homolog 24 (best-24), found in Caenorhabditis elegans.